Reading from the N-terminus, the 114-residue chain is Large ribosomal subunit protein bL19 (114 aa).

The protein belongs to the bacterial ribosomal protein bL19 family.

This protein is located at the 30S-50S ribosomal subunit interface and may play a role in the structure and function of the aminoacyl-tRNA binding site. The chain is Large ribosomal subunit protein bL19 from Clavibacter michiganensis subsp. michiganensis (strain NCPPB 382).